The sequence spans 119 residues: Non-specific lipid-transfer protein 12 (119 aa).

An N-terminal signal peptide occupies residues 1–24 (MAFTPKIITCLIVLTIYMASPTES). Cystine bridges form between cysteine 28-cysteine 75, cysteine 38-cysteine 52, cysteine 53-cysteine 98, and cysteine 73-cysteine 112.

The protein belongs to the plant LTP family.

Its function is as follows. Plant non-specific lipid-transfer proteins transfer phospholipids as well as galactolipids across membranes. May play a role in wax or cutin deposition in the cell walls of expanding epidermal cells and certain secretory tissues. This chain is Non-specific lipid-transfer protein 12 (LTP12), found in Arabidopsis thaliana (Mouse-ear cress).